The chain runs to 422 residues: Roquefortine prenyltransferase roqD (422 aa).

Glu100 provides a ligand contact to substrate. Dimethylallyl diphosphate contacts are provided by Arg113, Lys200, and Tyr202. Tyr204 lines the substrate pocket. Dimethylallyl diphosphate is bound by residues Lys268, Tyr270, Tyr353, Tyr416, and Tyr420.

The protein belongs to the tryptophan dimethylallyltransferase family.

Its pathway is alkaloid biosynthesis. Functionally, roquefortine prenyltransferase; part of the gene cluster that mediates the biosynthesis of the mycotoxins roquefortine C and meleagrin. The first stage is catalyzed by the dipeptide synthase roqA which condenses histidine and tryptophan to produce histidyltryptophanyldiketopiperazine (HTD). HTD is then converted to roquefortine C through two possible pathways. In the first pathway, prenyltransferase roqD transforms HTD to the intermediate roquefortine D, which is in turn converted to roquefortine C by the cytochrome P450 monooxygenase roqR. In the second pathway, HTD is first converted to the intermediate dehydrohistidyltryptophanyldi-ketopiperazine (DHTD) by roqR which is then prenylated by roqD to form roquefortine C. Roquefortine C can be further transformed to meleagrin via three more reactions including oxydation to glandicolin A by roqM, which is further reduced to glandicoline B by roqO. Finally, glandicoline B is converted to meleagrin by the glandicoline B O-methyltransferase roqN. More studies identified further branching and additional metabolites produced by the roquefortine/meleagrin cluster, including roquefortine F, roquefortine L, roquefortine M, roquefortine N and neoxaline. This chain is Roquefortine prenyltransferase roqD, found in Penicillium rubens (strain ATCC 28089 / DSM 1075 / NRRL 1951 / Wisconsin 54-1255) (Penicillium chrysogenum).